The following is a 706-amino-acid chain: Zinc finger and BTB domain-containing protein 17 (706 aa).

A BTB domain is found at 1–12 (LKSLTVLAESPV). The tract at residues 32-194 (TAARVTQGDS…LLRSGTYSDR (163 aa)) is disordered. Basic and acidic residues predominate over residues 67–78 (EPAEQPDAKEGP). Low complexity predominate over residues 90–106 (AAEASPAAVSPSRPQPA). The segment covering 134–148 (GKEEEGEAMVEDEEE) has biased composition (acidic residues). Positions 170–182 (SGSTDSGQENSGE) are enriched in polar residues. 13 C2H2-type zinc fingers span residues 205–227 (HKCE…IRIH), 233–255 (FSCR…EKTH), 261–283 (YGCE…KKRH), 289–311 (YRCD…QLVH), 317–339 (YQCD…LETH), 345–367 (HKCP…LKIH), 373–395 (LKCR…LRIH), 401–423 (YVCV…VPIH), 427–450 (KPCQ…HVRH), 457–479 (YVCE…IRHH), 485–507 (HKCT…IIIH), 513–536 (FLCD…KTVH), and 618–640 (YACD…VRIH). The interval 680–706 (PRDSPQEAPAAPLAPVPLAGEGQAPAE) is disordered. A compositionally biased stretch (low complexity) spans 687-698 (APAAPLAPVPLA).

It belongs to the krueppel C2H2-type zinc-finger protein family.

Its subcellular location is the nucleus. In terms of biological role, transcription factor that can function as an activator or repressor depending on its binding partners, and by targeting negative regulators of cell cycle progression. Plays a critical role in early lymphocyte development, where it is essential to prevent apoptosis in lymphoid precursors, allowing them to survive in response to IL7 and undergo proper lineage commitment. Has been shown to bind to the promoters of adenovirus major late protein and cyclin D1 and activate transcription. Required for early embryonic development during gastrulation. Represses RB1 transcription. This is Zinc finger and BTB domain-containing protein 17 (ZBTB17) from Gallus gallus (Chicken).